Consider the following 227-residue polypeptide: Enolase-phosphatase E1 (227 aa).

The protein belongs to the HAD-like hydrolase superfamily. MasA/MtnC family. Monomer. Mg(2+) is required as a cofactor.

It carries out the reaction 5-methylsulfanyl-2,3-dioxopentyl phosphate + H2O = 1,2-dihydroxy-5-(methylsulfanyl)pent-1-en-3-one + phosphate. Its pathway is amino-acid biosynthesis; L-methionine biosynthesis via salvage pathway; L-methionine from S-methyl-5-thio-alpha-D-ribose 1-phosphate: step 3/6. The protein operates within amino-acid biosynthesis; L-methionine biosynthesis via salvage pathway; L-methionine from S-methyl-5-thio-alpha-D-ribose 1-phosphate: step 4/6. In terms of biological role, bifunctional enzyme that catalyzes the enolization of 2,3-diketo-5-methylthiopentyl-1-phosphate (DK-MTP-1-P) into the intermediate 2-hydroxy-3-keto-5-methylthiopentenyl-1-phosphate (HK-MTPenyl-1-P), which is then dephosphorylated to form the acireductone 1,2-dihydroxy-3-keto-5-methylthiopentene (DHK-MTPene). This Azotobacter vinelandii (strain DJ / ATCC BAA-1303) protein is Enolase-phosphatase E1.